The following is a 121-amino-acid chain: Keratin-associated protein 1-4 (121 aa).

This sequence belongs to the KRTAP type 1 family. Interacts with hair keratins. In terms of tissue distribution, expressed in the middle/upper portions of the hair cortex, in the region termed the keratogenous zone.

Functionally, in the hair cortex, hair keratin intermediate filaments are embedded in an interfilamentous matrix, consisting of hair keratin-associated proteins (KRTAP), which are essential for the formation of a rigid and resistant hair shaft through their extensive disulfide bond cross-linking with abundant cysteine residues of hair keratins. The matrix proteins include the high-sulfur and high-glycine-tyrosine keratins. This Homo sapiens (Human) protein is Keratin-associated protein 1-4 (KRTAP1-4).